The sequence spans 974 residues: Cell division control protein 15 (974 aa).

Residues 25-272 form the Protein kinase domain; sequence YHLKQVIGRG…ADQLLKHVWI (248 aa). ATP is bound by residues 31 to 39 and Lys54; that span reads IGRGSYGVV. Asp146 functions as the Proton acceptor in the catalytic mechanism. Residues 360 to 702 form a self association domain region; sequence CSLENIADTI…ITAICVEMSL (343 aa). Positions 554–563 are enriched in low complexity; sequence SSSLPLSSSP. Positions 554-592 are disordered; that stretch reads SSSLPLSSSPTRNSPVNSVQSPSRSPVHSLMATRPSSPM. Phosphoserine is present on residues Ser561 and Ser567. The segment covering 564 to 579 has biased composition (polar residues); the sequence is TRNSPVNSVQSPSRSP. Residues 751 to 974 form an auto-inhibitory domain region; it reads TVGSSESHSV…FSVPITTFQT (224 aa). Thr870 carries the phosphothreonine modification. The disordered stretch occupies residues 941–974; sequence AAIGSSPTKDERSNLRSSKDKSDGFSVPITTFQT. Residues 948–963 show a composition bias toward basic and acidic residues; the sequence is TKDERSNLRSSKDKSD.

It belongs to the protein kinase superfamily. Ser/Thr protein kinase family. Homodimer. Interacts with TEM1. In terms of processing, phosphorylation by CDK1 reduces the binding to the mother spindle pole body. The extent of phosphorylation gradually increases during cell-cycle progression until some point during late anaphase/telophase when it is rapidly dephosphorylated by CDC14. Phosphorylation inhibits kinase activity and dephosphorylation by CDC14 activates CDC15.

Its subcellular location is the cytoplasm. The protein resides in the cytoskeleton. It localises to the spindle pole. It is found in the bud neck. It carries out the reaction L-seryl-[protein] + ATP = O-phospho-L-seryl-[protein] + ADP + H(+). The enzyme catalyses L-threonyl-[protein] + ATP = O-phospho-L-threonyl-[protein] + ADP + H(+). With respect to regulation, kinase activity is inhibited by phosphorylation and activated by dephosphorylation by CDC14. Functionally, protein kinase of the mitotic exit network (MEN) essential for late nuclear division in the mitotic cycle. Promotes mitotic exit by phosphorylating DBF2 and directly switching on DBF2 kinase activity. Involved in the localization of DBF2 and DBF20 to the neck which is necessary to undergo cytokinesis. Plays a role in segregation of chromosomes during recovery from spindle checkpoint activation. Required for spindle pole localization of CDK1 and inactivation of CDC2 kinase activity at the end of mitosis. Required for spindle disassembly after meiosis II and plays a role in spore morphogenesis. In Saccharomyces cerevisiae (strain ATCC 204508 / S288c) (Baker's yeast), this protein is Cell division control protein 15 (CDC15).